The chain runs to 187 residues: COMM domain-containing protein 1 (187 aa).

The COMM domain occupies 112–186; the sequence is SLQKISWRID…SIQKHLQAKS (75 aa).

It belongs to the COMM domain-containing protein 1 family. As to quaternary structure, component of the commander complex consisting of the CCC subcomplex and the retriever subcomplex.

In terms of biological role, scaffold protein in the commander complex that is essential for endosomal recycling of transmembrane cargos; the commander complex is composed of the CCC subcomplex and the retriever subcomplex. In Dictyostelium discoideum (Social amoeba), this protein is COMM domain-containing protein 1 (commd1).